Reading from the N-terminus, the 276-residue chain is Glutamate 5-kinase (276 aa).

K14 provides a ligand contact to ATP. Residues S54, D141, and N157 each coordinate substrate. Residues 177-178 (SD) and 219-225 (TGGMLTK) each bind ATP.

It belongs to the glutamate 5-kinase family.

It is found in the cytoplasm. It catalyses the reaction L-glutamate + ATP = L-glutamyl 5-phosphate + ADP. The protein operates within amino-acid biosynthesis; L-proline biosynthesis; L-glutamate 5-semialdehyde from L-glutamate: step 1/2. Functionally, catalyzes the transfer of a phosphate group to glutamate to form L-glutamate 5-phosphate. This chain is Glutamate 5-kinase, found in Listeria welshimeri serovar 6b (strain ATCC 35897 / DSM 20650 / CCUG 15529 / CIP 8149 / NCTC 11857 / SLCC 5334 / V8).